The chain runs to 617 residues: Ceramide transfer protein (617 aa).

The segment covering methionine 1–glycine 11 has biased composition (polar residues). Residues methionine 1 to proline 23 form a disordered region. Positions proline 23–serine 117 constitute a PH domain. A coiled-coil region spans residues arginine 268–histidine 302. An FFAT motif is present at residues glutamate 320–glutamate 326. Over residues glutamine 332–arginine 344 the composition is skewed to basic and acidic residues. Positions glutamine 332–glutamate 355 are disordered. The region spanning aspartate 383–alanine 611 is the START domain. Positions 466, 487, 524, and 572 each coordinate an N-acylsphing-4-enine.

Its subcellular location is the cytoplasm. The protein localises to the golgi apparatus. The protein resides in the endoplasmic reticulum. The enzyme catalyses N-hexadecanoylsphing-4-enine(in) = N-hexadecanoylsphing-4-enine(out). Functionally, may mediate the intracellular trafficking of ceramide in a non-vesicular manner. The chain is Ceramide transfer protein (cert1) from Xenopus tropicalis (Western clawed frog).